Consider the following 706-residue polypeptide: Protein kinase C theta type (706 aa).

The C2 domain maps to 1–107; sequence MSPFLRIGLS…KNNGKTEIWL (107 aa). Residue Y90 is modified to Phosphotyrosine; by LCK. A Phorbol-ester/DAG-type 1 zinc finger spans residues 159–209; the sequence is CHEFTATFFPQPTFCSVCHEFVWGLNKQGYQCRQCNAAIHKKCIDKVIAKC. T219 bears the Phosphothreonine; by autocatalysis mark. A Phorbol-ester/DAG-type 2 zinc finger spans residues 231–281; the sequence is PHRFKVYNYKSPTFCEHCGTLLWGLARQGLKCDACGMNVHHRCQTKVANLC. S348 is modified (phosphoserine). Positions 380–634 constitute a Protein kinase domain; that stretch reads FILHKMLGKG…RGDIRQHPLF (255 aa). ATP-binding positions include 386 to 394 and K409; that span reads LGKGSFGKV. D504 serves as the catalytic Proton acceptor. T538 is subject to Phosphothreonine; by PDPK1. Residues 635 to 706 form the AGC-kinase C-terminal domain; that stretch reads REINWEELER…MNPGMERLIS (72 aa). 3 positions are modified to phosphoserine: S676, S685, and S695.

Belongs to the protein kinase superfamily. AGC Ser/Thr protein kinase family. PKC subfamily. As to quaternary structure, part of a lipid raft complex composed at least of BCL10, CARD11, MALT1 and IKBKB. Interacts with GLRX3 (via N-terminus). Interacts with ECT2. Interacts with CCDC88A/GIV; the interaction leads to phosphorylation of CCDC88A and inhibition of its guanine nucleotide exchange factor activity. Interacts with PRKCH upstream open reading frame 2; the interaction leads to inhibition of kinase activity. Interacts with CD28. Requires Mg(2+) as cofactor. In terms of processing, autophosphorylation at Thr-219 is required for targeting to the TCR and cellular function of PRKCQ upon antigen receptor ligation. Following TCR stimulation, phosphorylated at Tyr-90 and Ser-685. Expressed in skeletal muscle, T-cells, megakaryoblastic cells and platelets.

It localises to the cytoplasm. The protein localises to the cell membrane. It carries out the reaction L-seryl-[protein] + ATP = O-phospho-L-seryl-[protein] + ADP + H(+). The enzyme catalyses L-threonyl-[protein] + ATP = O-phospho-L-threonyl-[protein] + ADP + H(+). Novel PKCs (PRKCD, PRKCE, PRKCH and PRKCQ) are calcium-insensitive, but activated by diacylglycerol (DAG) and phosphatidylserine. Three specific sites; Thr-538 (activation loop of the kinase domain), Ser-676 (turn motif) and Ser-695 (hydrophobic region), need to be phosphorylated for its full activation. Inhibited by PRKCH upstream open reading frame 2. Functionally, calcium-independent, phospholipid- and diacylglycerol (DAG)-dependent serine/threonine-protein kinase that mediates non-redundant functions in T-cell receptor (TCR) signaling, including T-cells activation, proliferation, differentiation and survival, by mediating activation of multiple transcription factors such as NF-kappa-B, JUN, NFATC1 and NFATC2. In TCR-CD3/CD28-co-stimulated T-cells, is required for the activation of NF-kappa-B and JUN, which in turn are essential for IL2 production, and participates in the calcium-dependent NFATC1 and NFATC2 transactivation. Mediates the activation of the canonical NF-kappa-B pathway (NFKB1) by direct phosphorylation of CARD11 on several serine residues, inducing CARD11 association with lipid rafts and recruitment of the BCL10-MALT1 complex, which then activates IKK complex, resulting in nuclear translocation and activation of NFKB1. May also play an indirect role in activation of the non-canonical NF-kappa-B (NFKB2) pathway. In the signaling pathway leading to JUN activation, acts by phosphorylating the mediator STK39/SPAK and may not act through MAP kinases signaling. Plays a critical role in TCR/CD28-induced NFATC1 and NFATC2 transactivation by participating in the regulation of reduced inositol 1,4,5-trisphosphate generation and intracellular calcium mobilization. After costimulation of T-cells through CD28 can phosphorylate CBLB and is required for the ubiquitination and subsequent degradation of CBLB, which is a prerequisite for the activation of TCR. During T-cells differentiation, plays an important role in the development of T-helper 2 (Th2) cells following immune and inflammatory responses, and, in the development of inflammatory autoimmune diseases, is necessary for the activation of IL17-producing Th17 cells. May play a minor role in Th1 response. Upon TCR stimulation, mediates T-cell protective survival signal by phosphorylating BAD, thus protecting T-cells from BAD-induced apoptosis, and by up-regulating BCL-X(L)/BCL2L1 levels through NF-kappa-B and JUN pathways. In platelets, regulates signal transduction downstream of the ITGA2B, CD36/GP4, F2R/PAR1 and F2RL3/PAR4 receptors, playing a positive role in 'outside-in' signaling and granule secretion signal transduction. May relay signals from the activated ITGA2B receptor by regulating the uncoupling of WASP and WIPF1, thereby permitting the regulation of actin filament nucleation and branching activity of the Arp2/3 complex. May mediate inhibitory effects of free fatty acids on insulin signaling by phosphorylating IRS1, which in turn blocks IRS1 tyrosine phosphorylation and downstream activation of the PI3K/AKT pathway. Phosphorylates MSN (moesin) in the presence of phosphatidylglycerol or phosphatidylinositol. Phosphorylates PDPK1 at 'Ser-504' and 'Ser-532' and negatively regulates its ability to phosphorylate PKB/AKT1. Phosphorylates CCDC88A/GIV and inhibits its guanine nucleotide exchange factor activity. Phosphorylates and activates LRRK1, which phosphorylates RAB proteins involved in intracellular trafficking. This chain is Protein kinase C theta type (PRKCQ), found in Homo sapiens (Human).